Here is a 119-residue protein sequence, read N- to C-terminus: Large ribosomal subunit protein bL20 (119 aa).

It belongs to the bacterial ribosomal protein bL20 family.

Binds directly to 23S ribosomal RNA and is necessary for the in vitro assembly process of the 50S ribosomal subunit. It is not involved in the protein synthesizing functions of that subunit. The chain is Large ribosomal subunit protein bL20 from Alkalilimnicola ehrlichii (strain ATCC BAA-1101 / DSM 17681 / MLHE-1).